Here is a 542-residue protein sequence, read N- to C-terminus: Putative serine/threonine-protein kinase L205 (542 aa).

The span at 20–30 (FEKKSVGHNSD) shows a compositional bias: basic and acidic residues. Residues 20-49 (FEKKSVGHNSDDEYDDTVPYNEDDETSEEE) are disordered. The span at 31–49 (DEYDDTVPYNEDDETSEEE) shows a compositional bias: acidic residues. Residues 69–538 (YLLLKKIGSG…ADELLKHPWL (470 aa)) enclose the Protein kinase domain. ATP is bound by residues 75 to 83 (IGSGNNASV) and K98. The active-site Proton acceptor is the D201. The disordered stretch occupies residues 278-314 (EELIPDDPDNNEKYYDSTDSEEYDYSDNSDYYDDDED). Residues 295–314 (TDSEEYDYSDNSDYYDDDED) show a composition bias toward acidic residues.

Belongs to the protein kinase superfamily. Ser/Thr protein kinase family.

It catalyses the reaction L-seryl-[protein] + ATP = O-phospho-L-seryl-[protein] + ADP + H(+). It carries out the reaction L-threonyl-[protein] + ATP = O-phospho-L-threonyl-[protein] + ADP + H(+). The protein is Putative serine/threonine-protein kinase L205 of Acanthamoeba polyphaga (Amoeba).